We begin with the raw amino-acid sequence, 363 residues long: Aminomethyltransferase (363 aa).

The protein belongs to the GcvT family. The glycine cleavage system is composed of four proteins: P, T, L and H.

It carries out the reaction N(6)-[(R)-S(8)-aminomethyldihydrolipoyl]-L-lysyl-[protein] + (6S)-5,6,7,8-tetrahydrofolate = N(6)-[(R)-dihydrolipoyl]-L-lysyl-[protein] + (6R)-5,10-methylene-5,6,7,8-tetrahydrofolate + NH4(+). The glycine cleavage system catalyzes the degradation of glycine. The chain is Aminomethyltransferase from Saccharophagus degradans (strain 2-40 / ATCC 43961 / DSM 17024).